We begin with the raw amino-acid sequence, 602 residues long: MAASSSSAASFFGVRQDDQSHLLPPNSSAAAPPPPPPHHQAPLPPLEAPPQKKKRNQPRTPNSDAEVIALSPKTLMATNRFICEVCNKGFQREQNLQLHRRGHNLPWKLKQKSTKEVKRKVYLCPEPSCVHHDPSRALGDLTGIKKHYYRKHGEKKWKCDKCSKRYAVQSDWKAHSKTCGTKEYRCDCGTLFSRRDSFITHRAFCDALAQESARHPTSLTSLPSHHFPYGQNTNNSNNNASSMILGLSHMGAPQNLDHQPGDVLRLGSGGGGGGAASRSSSDLIAANASGYFMQEQNPSFHDQQDHHHHHQQGFLAGNNNIKQSPMSFQQNLMQFSHDNHNSAPSNVFNLSFLSGNNGVTSATSNPNAAAAAAVSSGNLMISNHYDGENAVGGGGEGSTGLFPNNLMSSADRISSGSVPSLFSSSMQSPNSAPHMSATALLQKAAQMGSTSSNNNNGSNTNNNNNASSILRSFGSGIYGENESNLQDLMNSFSNPGATGNVNGVDSPFGSYGGVNKGLSADKQSMTRDFLGVGQIVKSMSGSGGFQQQQQQQQQQQQQQQHGNSRERVGSSSDSADRSSMNVNTGGGPASTSPPYGIHHASF.

2 stretches are compositionally biased toward low complexity: residues 1 to 10 (MAASSSSAAS) and 21 to 30 (HLLPPNSSAA). A chloroplast-targeting transit peptide spans 1-50 (MAASSSSAASFFGVRQDDQSHLLPPNSSAAAPPPPPPHHQAPLPPLEAPP). The interval 1-65 (MAASSSSAAS…NQPRTPNSDA (65 aa)) is disordered. The segment covering 31 to 48 (APPPPPPHHQAPLPPLEA) has biased composition (pro residues). The residue at position 60 (Thr-60) is a Phosphothreonine. Ser-71 carries the phosphoserine modification. 2 C2H2-type zinc fingers span residues 81–103 (FICEVCNKGFQREQNLQLHRRGH) and 122–152 (YLCPEPSCVHHDPSRALGDLTGIKKHYYRKH). Residues 157–180 (WKCDKCSKRYAVQSDWKAHSKTCG) form a C2H2-type 2; degenerate zinc finger. Zn(2+)-binding residues include Cys-159, Cys-162, His-175, Cys-179, Cys-186, Cys-188, His-201, and Cys-205. The segment at 184–207 (YRCDCGTLFSRRDSFITHRAFCDA) adopts a CCHC-type 2; atypical zinc-finger fold. The segment at 194–206 (RRDSFITHRAFCD) is SHR-binding. Disordered regions lie at residues 443-467 (KAAQMGSTSSNNNNGSNTNNNNNAS) and 537-602 (KSMS…HASF). Composition is skewed to low complexity over residues 448 to 467 (GSTSSNNNNGSNTNNNNNAS), 546 to 560 (QQQQQQQQQQQQQQQ), and 570 to 579 (SSSDSADRSS).

In terms of assembly, binds to RGA and SCL3 competitively. Highly expressed in leaf tissues.

It is found in the plastid. Its subcellular location is the chloroplast. Its function is as follows. Transcription factor acting as a positive regulator of the starch synthase SS4. Controls chloroplast development and starch granule formation. Binds DNA via its zinc fingers. Recognizes and binds to SCL3 promoter sequence 5'-AGACAA-3' to promote its expression when in complex with RGA. The sequence is that of Protein indeterminate-domain 5, chloroplastic from Arabidopsis thaliana (Mouse-ear cress).